A 446-amino-acid chain; its full sequence is UDP-N-acetylmuramoylalanine--D-glutamate ligase (446 aa).

ATP is bound at residue 112 to 118 (GTNGKST).

It belongs to the MurCDEF family.

Its subcellular location is the cytoplasm. It catalyses the reaction UDP-N-acetyl-alpha-D-muramoyl-L-alanine + D-glutamate + ATP = UDP-N-acetyl-alpha-D-muramoyl-L-alanyl-D-glutamate + ADP + phosphate + H(+). It participates in cell wall biogenesis; peptidoglycan biosynthesis. Cell wall formation. Catalyzes the addition of glutamate to the nucleotide precursor UDP-N-acetylmuramoyl-L-alanine (UMA). The chain is UDP-N-acetylmuramoylalanine--D-glutamate ligase from Baumannia cicadellinicola subsp. Homalodisca coagulata.